The chain runs to 213 residues: Ribosomal RNA small subunit methyltransferase G (213 aa).

Residues Gly55, 105–106 (AE), and Arg124 contribute to the S-adenosyl-L-methionine site.

Belongs to the methyltransferase superfamily. RNA methyltransferase RsmG family.

The protein localises to the cytoplasm. Functionally, specifically methylates the N7 position of a guanine in 16S rRNA. The polypeptide is Ribosomal RNA small subunit methyltransferase G (Fervidobacterium nodosum (strain ATCC 35602 / DSM 5306 / Rt17-B1)).